Reading from the N-terminus, the 493-residue chain is Chromosomal replication initiator protein DnaA (493 aa).

The segment at 1-105 (MSDTIQQEAP…LMYSIVIDKS (105 aa)) is domain I, interacts with DnaA modulators. The segment at 105–152 (SQGQPVTIELPHQIDAAPAERSVRPEAPGQKASAERERLEIARPRFES) is domain II. The segment at 121–140 (APAERSVRPEAPGQKASAER) is disordered. The interval 153-370 (NLNPKYTFST…GCIVKLLAAH (218 aa)) is domain III, AAA+ region. 4 residues coordinate ATP: glycine 198, glycine 200, lysine 201, and threonine 202. The tract at residues 371–493 (SLDNQEIDLQ…LRKRIEIMSM (123 aa)) is domain IV, binds dsDNA.

The protein belongs to the DnaA family. Oligomerizes as a right-handed, spiral filament on DNA at oriC.

It localises to the cytoplasm. Functionally, plays an essential role in the initiation and regulation of chromosomal replication. ATP-DnaA binds to the origin of replication (oriC) to initiate formation of the DNA replication initiation complex once per cell cycle. Binds the DnaA box (a 9 base pair repeat at the origin) and separates the double-stranded (ds)DNA. Forms a right-handed helical filament on oriC DNA; dsDNA binds to the exterior of the filament while single-stranded (ss)DNA is stabiized in the filament's interior. The ATP-DnaA-oriC complex binds and stabilizes one strand of the AT-rich DNA unwinding element (DUE), permitting loading of DNA polymerase. After initiation quickly degrades to an ADP-DnaA complex that is not apt for DNA replication. Binds acidic phospholipids. This chain is Chromosomal replication initiator protein DnaA, found in Chlorobaculum tepidum (strain ATCC 49652 / DSM 12025 / NBRC 103806 / TLS) (Chlorobium tepidum).